Here is a 360-residue protein sequence, read N- to C-terminus: Phospho-N-acetylmuramoyl-pentapeptide-transferase (360 aa).

Transmembrane regions (helical) follow at residues 26 to 46, 70 to 90, 94 to 114, 132 to 152, 168 to 188, 199 to 219, 239 to 259, 263 to 283, 288 to 308, and 338 to 358; these read AIMS…RLIA, GTPT…ALLW, SNPY…VGFV, WKYF…YMHG, VMPQ…VGTS, GLAI…AWAT, LVVL…FNTY, VFMG…IAVL, LLLV…ILQV, and VIVR…ATLK.

Belongs to the glycosyltransferase 4 family. MraY subfamily. It depends on Mg(2+) as a cofactor.

Its subcellular location is the cell inner membrane. The enzyme catalyses UDP-N-acetyl-alpha-D-muramoyl-L-alanyl-gamma-D-glutamyl-meso-2,6-diaminopimeloyl-D-alanyl-D-alanine + di-trans,octa-cis-undecaprenyl phosphate = di-trans,octa-cis-undecaprenyl diphospho-N-acetyl-alpha-D-muramoyl-L-alanyl-D-glutamyl-meso-2,6-diaminopimeloyl-D-alanyl-D-alanine + UMP. It functions in the pathway cell wall biogenesis; peptidoglycan biosynthesis. In terms of biological role, catalyzes the initial step of the lipid cycle reactions in the biosynthesis of the cell wall peptidoglycan: transfers peptidoglycan precursor phospho-MurNAc-pentapeptide from UDP-MurNAc-pentapeptide onto the lipid carrier undecaprenyl phosphate, yielding undecaprenyl-pyrophosphoryl-MurNAc-pentapeptide, known as lipid I. In Photobacterium profundum (strain SS9), this protein is Phospho-N-acetylmuramoyl-pentapeptide-transferase.